Consider the following 344-residue polypeptide: Enoyl-[acyl-carrier-protein] reductase, mitochondrial (344 aa).

The N-terminal 14 residues, 1–14 (MLKVLSLRSALQRA), are a transit peptide targeting the mitochondrion. The active-site Proton donor is the tyrosine 69. NADP(+) contacts are provided by residues asparagine 142, 168–171 (NSAV), 191–193 (RSR), 255–258 (YGGM), 280–282 (FWM), and lysine 338.

This sequence belongs to the zinc-containing alcohol dehydrogenase family. Quinone oxidoreductase subfamily. Homodimer.

It is found in the mitochondrion. It carries out the reaction a 2,3-saturated acyl-[ACP] + NADP(+) = a (2E)-enoyl-[ACP] + NADPH + H(+). In terms of biological role, catalyzes the NADPH-dependent reduction of trans-2-enoyl thioesters in mitochondrial fatty acid synthesis (fatty acid synthesis type II). Fatty acid chain elongation in mitochondria uses acyl carrier protein (ACP) as an acyl group carrier, but the enzyme accepts both ACP and CoA thioesters as substrates in vitro. May provide the octanoyl chain used for lipoic acid biosynthesis, regulating protein lipoylation and mitochondrial respiratory activity. Involved in iron homeostasis; affecting Fe-S cluster assembly and ceramide metabolism. Required for proper morphology and bioenergetic functions of mitochondria. Required for maintenance of neurons. This is Enoyl-[acyl-carrier-protein] reductase, mitochondrial from Caenorhabditis elegans.